The following is a 695-amino-acid chain: Elongation factor G 1 (695 aa).

The 276-residue stretch at 6–281 (TRYRNIGIFA…AVVDYLPNPK (276 aa)) folds into the tr-type G domain. Residues 15–22 (AHVDAGKT), 79–83 (DTPGH), and 133–136 (NKLD) contribute to the GTP site.

This sequence belongs to the TRAFAC class translation factor GTPase superfamily. Classic translation factor GTPase family. EF-G/EF-2 subfamily.

It is found in the cytoplasm. In terms of biological role, catalyzes the GTP-dependent ribosomal translocation step during translation elongation. During this step, the ribosome changes from the pre-translocational (PRE) to the post-translocational (POST) state as the newly formed A-site-bound peptidyl-tRNA and P-site-bound deacylated tRNA move to the P and E sites, respectively. Catalyzes the coordinated movement of the two tRNA molecules, the mRNA and conformational changes in the ribosome. This Synechocystis sp. (strain ATCC 27184 / PCC 6803 / Kazusa) protein is Elongation factor G 1 (fusA).